A 232-amino-acid chain; its full sequence is Protein fmp52-1, mitochondrial (232 aa).

The N-terminal 36 residues, 1-36 (MASVALIGCTGMVGSHILTSLLAHPSVARVDTISRR), are a transit peptide targeting the mitochondrion.

Belongs to the FMP52 family.

It localises to the mitochondrion outer membrane. The chain is Protein fmp52-1, mitochondrial (fmp521) from Aspergillus terreus (strain NIH 2624 / FGSC A1156).